The sequence spans 337 residues: tRNA N6-adenosine threonylcarbamoyltransferase (337 aa).

Fe cation is bound by residues H111 and H115. Residues 134–138 (LVSGG), D167, G180, and N272 each bind substrate. D300 is a binding site for Fe cation.

It belongs to the KAE1 / TsaD family. It depends on Fe(2+) as a cofactor.

Its subcellular location is the cytoplasm. It catalyses the reaction L-threonylcarbamoyladenylate + adenosine(37) in tRNA = N(6)-L-threonylcarbamoyladenosine(37) in tRNA + AMP + H(+). Required for the formation of a threonylcarbamoyl group on adenosine at position 37 (t(6)A37) in tRNAs that read codons beginning with adenine. Is involved in the transfer of the threonylcarbamoyl moiety of threonylcarbamoyl-AMP (TC-AMP) to the N6 group of A37, together with TsaE and TsaB. TsaD likely plays a direct catalytic role in this reaction. The protein is tRNA N6-adenosine threonylcarbamoyltransferase of Escherichia coli O45:K1 (strain S88 / ExPEC).